Consider the following 137-residue polypeptide: Large ribosomal subunit protein uL16 (137 aa).

Residues 1–16 show a composition bias toward basic residues; the sequence is MLQPKRTKFRKMQKGR. Positions 1 to 22 are disordered; it reads MLQPKRTKFRKMQKGRIRGEAK.

This sequence belongs to the universal ribosomal protein uL16 family. Part of the 50S ribosomal subunit.

Binds 23S rRNA and is also seen to make contacts with the A and possibly P site tRNAs. This is Large ribosomal subunit protein uL16 from Jannaschia sp. (strain CCS1).